The primary structure comprises 203 residues: Protein GrpE (203 aa).

The interval 1 to 38 (MTQDQTAEQMPAAESADQSADQGPAAESAAPPAVDSER) is disordered.

This sequence belongs to the GrpE family. Homodimer.

It is found in the cytoplasm. Its function is as follows. Participates actively in the response to hyperosmotic and heat shock by preventing the aggregation of stress-denatured proteins, in association with DnaK and GrpE. It is the nucleotide exchange factor for DnaK and may function as a thermosensor. Unfolded proteins bind initially to DnaJ; upon interaction with the DnaJ-bound protein, DnaK hydrolyzes its bound ATP, resulting in the formation of a stable complex. GrpE releases ADP from DnaK; ATP binding to DnaK triggers the release of the substrate protein, thus completing the reaction cycle. Several rounds of ATP-dependent interactions between DnaJ, DnaK and GrpE are required for fully efficient folding. The polypeptide is Protein GrpE (Paramagnetospirillum magneticum (strain ATCC 700264 / AMB-1) (Magnetospirillum magneticum)).